The sequence spans 144 residues: Large ribosomal subunit protein uL15 (144 aa).

Residues 1–49 form a disordered region; sequence MRLNTLSPAAGSKSAPKRVGRGIGSGLGKTAGRGHKGQKSRSGGGVRVG. The span at 21–31 shows a compositional bias: gly residues; that stretch reads RGIGSGLGKTA.

Belongs to the universal ribosomal protein uL15 family. As to quaternary structure, part of the 50S ribosomal subunit.

In terms of biological role, binds to the 23S rRNA. The protein is Large ribosomal subunit protein uL15 of Shewanella frigidimarina (strain NCIMB 400).